The following is a 223-amino-acid chain: ATP phosphoribosyltransferase (223 aa).

Belongs to the ATP phosphoribosyltransferase family. Short subfamily. As to quaternary structure, heteromultimer composed of HisG and HisZ subunits.

The protein resides in the cytoplasm. The enzyme catalyses 1-(5-phospho-beta-D-ribosyl)-ATP + diphosphate = 5-phospho-alpha-D-ribose 1-diphosphate + ATP. Its pathway is amino-acid biosynthesis; L-histidine biosynthesis; L-histidine from 5-phospho-alpha-D-ribose 1-diphosphate: step 1/9. Catalyzes the condensation of ATP and 5-phosphoribose 1-diphosphate to form N'-(5'-phosphoribosyl)-ATP (PR-ATP). Has a crucial role in the pathway because the rate of histidine biosynthesis seems to be controlled primarily by regulation of HisG enzymatic activity. This is ATP phosphoribosyltransferase from Desulfitobacterium hafniense (strain Y51).